The chain runs to 171 residues: Large ribosomal subunit protein uL24 (171 aa).

The segment at 1-124 is large ribosomal subunit protein uL24; the sequence is MNIKTGDTVV…AKPAKTKAEK (124 aa). Positions 108 to 171 are disordered; sequence GQTLDKAAKP…SVQKKGASGK (64 aa). The segment at 125 to 171 is unknown; that stretch reads VEKAATSSTDKPAKVTKAAKEAKPVKAVKSQKVEKNTSVQKKGASGK.

The protein belongs to the universal ribosomal protein uL24 family. Part of the 50S ribosomal subunit.

Functionally, one of two assembly initiator proteins, it binds directly to the 5'-end of the 23S rRNA, where it nucleates assembly of the 50S subunit. Its function is as follows. One of the proteins that surrounds the polypeptide exit tunnel on the outside of the subunit. The sequence is that of Large ribosomal subunit protein uL24 from Acholeplasma laidlawii (strain PG-8A).